Here is a 298-residue protein sequence, read N- to C-terminus: Oxygen-dependent coproporphyrinogen-III oxidase (298 aa).

A substrate-binding site is contributed by S92. 2 residues coordinate a divalent metal cation: H96 and H106. H106 functions as the Proton donor in the catalytic mechanism. 108-110 (NVR) contacts substrate. A divalent metal cation contacts are provided by H145 and H175. Residues 239 to 274 (YVEFNLVYDRGTLFGLQSGGRSESILMSLPPRVRWE) are important for dimerization. A substrate-binding site is contributed by 257-259 (GGR).

The protein belongs to the aerobic coproporphyrinogen-III oxidase family. In terms of assembly, homodimer. The cofactor is a divalent metal cation.

It localises to the cytoplasm. The enzyme catalyses coproporphyrinogen III + O2 + 2 H(+) = protoporphyrinogen IX + 2 CO2 + 2 H2O. It functions in the pathway porphyrin-containing compound metabolism; protoporphyrin-IX biosynthesis; protoporphyrinogen-IX from coproporphyrinogen-III (O2 route): step 1/1. Functionally, involved in the heme biosynthesis. Catalyzes the aerobic oxidative decarboxylation of propionate groups of rings A and B of coproporphyrinogen-III to yield the vinyl groups in protoporphyrinogen-IX. This is Oxygen-dependent coproporphyrinogen-III oxidase from Stenotrophomonas maltophilia (strain K279a).